The chain runs to 399 residues: Protein LIGULELESS 1 (399 aa).

Positions 1 to 28 are disordered; that stretch reads MMNLSAAANGRDEFPPYVVPSNAAAPPP. Low complexity predominate over residues 15-24; the sequence is PPYVVPSNAA. The SBP-type zinc finger occupies 182 to 260; the sequence is PPRCQAEGCK…ADHNRRRRKS (79 aa). Residues cysteine 185, cysteine 190, cysteine 207, histidine 210, cysteine 227, cysteine 230, histidine 234, and cysteine 246 each contribute to the Zn(2+) site. Positions 243 to 259 match the Bipartite nuclear localization signal motif; it reads KKSCRKRLADHNRRRRK. Residues 250–292 are disordered; sequence LADHNRRRRKSKPSDADAGDKKRAHANKAAAAKDKAESSSKNM. Over residues 261 to 270 the composition is skewed to basic and acidic residues; it reads KPSDADAGDK.

In terms of tissue distribution, leaf ligular region, blade and sheath.

The protein resides in the nucleus. Functionally, involved in the formation of ligules and auricles during leaf organogenesis. The sequence is that of Protein LIGULELESS 1 (LG1) from Zea mays (Maize).